A 60-amino-acid chain; its full sequence is DNA gyrase inhibitor YacG (60 aa).

C3, C6, C18, and C22 together coordinate Zn(2+). A disordered region spans residues 38–60 (PASSEDEEEPLDQEAETPVAPRH). A compositionally biased stretch (acidic residues) spans 41–52 (SEDEEEPLDQEA).

It belongs to the DNA gyrase inhibitor YacG family. As to quaternary structure, interacts with GyrB. It depends on Zn(2+) as a cofactor.

In terms of biological role, inhibits all the catalytic activities of DNA gyrase by preventing its interaction with DNA. Acts by binding directly to the C-terminal domain of GyrB, which probably disrupts DNA binding by the gyrase. This is DNA gyrase inhibitor YacG from Ruegeria pomeroyi (strain ATCC 700808 / DSM 15171 / DSS-3) (Silicibacter pomeroyi).